The sequence spans 62 residues: UPF0337 protein XCC0070 (62 aa).

A disordered region spans residues leucine 32–arginine 62.

It belongs to the UPF0337 (CsbD) family.

The polypeptide is UPF0337 protein XCC0070 (Xanthomonas campestris pv. campestris (strain ATCC 33913 / DSM 3586 / NCPPB 528 / LMG 568 / P 25)).